We begin with the raw amino-acid sequence, 444 residues long: ATP-dependent protease ATPase subunit HslU (444 aa).

Residues Ile18, 60-65, Asp256, Glu322, and Arg394 each bind ATP; that span reads GVGKTE.

This sequence belongs to the ClpX chaperone family. HslU subfamily. In terms of assembly, a double ring-shaped homohexamer of HslV is capped on each side by a ring-shaped HslU homohexamer. The assembly of the HslU/HslV complex is dependent on binding of ATP.

Its subcellular location is the cytoplasm. Its function is as follows. ATPase subunit of a proteasome-like degradation complex; this subunit has chaperone activity. The binding of ATP and its subsequent hydrolysis by HslU are essential for unfolding of protein substrates subsequently hydrolyzed by HslV. HslU recognizes the N-terminal part of its protein substrates and unfolds these before they are guided to HslV for hydrolysis. The chain is ATP-dependent protease ATPase subunit HslU from Klebsiella pneumoniae (strain 342).